We begin with the raw amino-acid sequence, 88 residues long: HssA/B-like protein 19 (88 aa).

Belongs to the hssA/B family.

This Dictyostelium discoideum (Social amoeba) protein is HssA/B-like protein 19 (hssl19).